The primary structure comprises 233 residues: Large ribosomal subunit protein eL6y (233 aa).

A compositionally biased stretch (basic and acidic residues) spans 48–72; the sequence is HDAKSKVDAPVEKPPKFYPAEDVKK. The segment at 48–82 is disordered; it reads HDAKSKVDAPVEKPPKFYPAEDVKKPLPNRRTAKP.

The protein belongs to the eukaryotic ribosomal protein eL6 family.

The protein is Large ribosomal subunit protein eL6y (RPL6B) of Arabidopsis thaliana (Mouse-ear cress).